The primary structure comprises 436 residues: 3-ketoacyl-CoA thiolase (436 aa).

Cysteine 99 (acyl-thioester intermediate) is an active-site residue. Catalysis depends on proton acceptor residues histidine 392 and cysteine 422.

Belongs to the thiolase-like superfamily. Thiolase family. Heterotetramer of two alpha chains (FadJ) and two beta chains (FadI).

It localises to the cytoplasm. The enzyme catalyses an acyl-CoA + acetyl-CoA = a 3-oxoacyl-CoA + CoA. The protein operates within lipid metabolism; fatty acid beta-oxidation. Its function is as follows. Catalyzes the final step of fatty acid oxidation in which acetyl-CoA is released and the CoA ester of a fatty acid two carbons shorter is formed. This is 3-ketoacyl-CoA thiolase from Pseudoalteromonas atlantica (strain T6c / ATCC BAA-1087).